The following is a 571-amino-acid chain: DNA primase (571 aa).

The CHC2-type zinc finger occupies 20–44 (CPFHKEKTPSFQVDTEKGYYHCFGC). One can recognise a Toprim domain in the interval 229–309 (AELVVVEGYM…KFRVRATSVP (81 aa)). Mg(2+) contacts are provided by Glu235, Asp280, and Asp282.

This sequence belongs to the DnaG primase family. Monomer. Interacts with DnaB. The cofactor is Zn(2+). It depends on Mg(2+) as a cofactor.

It carries out the reaction ssDNA + n NTP = ssDNA/pppN(pN)n-1 hybrid + (n-1) diphosphate.. Its function is as follows. RNA polymerase that catalyzes the synthesis of short RNA molecules used as primers for DNA polymerase during DNA replication. This chain is DNA primase, found in Deinococcus radiodurans (strain ATCC 13939 / DSM 20539 / JCM 16871 / CCUG 27074 / LMG 4051 / NBRC 15346 / NCIMB 9279 / VKM B-1422 / R1).